Here is a 224-residue protein sequence, read N- to C-terminus: Ribosomal RNA large subunit methyltransferase E (224 aa).

S-adenosyl-L-methionine contacts are provided by Gly60, Trp62, Asp93, Asp109, and Asp137. Lys177 acts as the Proton acceptor in catalysis.

Belongs to the class I-like SAM-binding methyltransferase superfamily. RNA methyltransferase RlmE family.

Its subcellular location is the cytoplasm. The catalysed reaction is uridine(2552) in 23S rRNA + S-adenosyl-L-methionine = 2'-O-methyluridine(2552) in 23S rRNA + S-adenosyl-L-homocysteine + H(+). Its function is as follows. Specifically methylates the uridine in position 2552 of 23S rRNA at the 2'-O position of the ribose in the fully assembled 50S ribosomal subunit. The chain is Ribosomal RNA large subunit methyltransferase E from Polynucleobacter asymbioticus (strain DSM 18221 / CIP 109841 / QLW-P1DMWA-1) (Polynucleobacter necessarius subsp. asymbioticus).